The sequence spans 159 residues: Sulfur carrier protein DsrE2 (159 aa).

The next 2 membrane-spanning stretches (helical) occupy residues Pro-21 to Gly-43 and Trp-72 to Met-91.

It localises to the cell membrane. Its pathway is energy metabolism; sulfur metabolism. Its function is as follows. Sulfur carrier protein probably involved in sulfur trafficking for oxidative dissimilatory sulfur metabolism. May be a component of a cytoplasmic sulfur relay system delivering sulfur to DsrC. Binds sulfur in the presence of sulfide in vitro. In Allochromatium vinosum (strain ATCC 17899 / DSM 180 / NBRC 103801 / NCIMB 10441 / D) (Chromatium vinosum), this protein is Sulfur carrier protein DsrE2.